We begin with the raw amino-acid sequence, 117 residues long: Protein OPG035 (117 aa).

It belongs to the poxviridae OPG035 family.

Its function is as follows. Bcl-2-like protein which contributes to virulence by preventing host NF-kappa-B activation in response to pro-inflammatory stimuli such as TNF-alpha or IL1B. This Bos taurus (Bovine) protein is Protein OPG035 (OPG035).